Reading from the N-terminus, the 488-residue chain is Ribosomal RNA small subunit methyltransferase F (488 aa).

S-adenosyl-L-methionine is bound by residues 135 to 141 (ASAPGSK), glutamate 159, aspartate 186, and aspartate 204. Cysteine 257 serves as the catalytic Nucleophile.

Belongs to the class I-like SAM-binding methyltransferase superfamily. RsmB/NOP family.

Its subcellular location is the cytoplasm. It catalyses the reaction cytidine(1407) in 16S rRNA + S-adenosyl-L-methionine = 5-methylcytidine(1407) in 16S rRNA + S-adenosyl-L-homocysteine + H(+). In terms of biological role, specifically methylates the cytosine at position 1407 (m5C1407) of 16S rRNA. The sequence is that of Ribosomal RNA small subunit methyltransferase F from Shewanella pealeana (strain ATCC 700345 / ANG-SQ1).